A 180-amino-acid chain; its full sequence is dCTP deaminase (180 aa).

DCTP is bound by residues 101-106 (KSSFAR) and aspartate 117. Glutamate 127 acts as the Proton donor/acceptor in catalysis. 2 residues coordinate dCTP: tyrosine 159 and glutamine 168.

This sequence belongs to the dCTP deaminase family. As to quaternary structure, homotrimer.

The enzyme catalyses dCTP + H2O + H(+) = dUTP + NH4(+). The protein operates within pyrimidine metabolism; dUMP biosynthesis; dUMP from dCTP (dUTP route): step 1/2. Functionally, catalyzes the deamination of dCTP to dUTP. This is dCTP deaminase from Ignicoccus hospitalis (strain KIN4/I / DSM 18386 / JCM 14125).